Consider the following 370-residue polypeptide: Protein-glutamate methylesterase/protein-glutamine glutaminase 3 (370 aa).

In terms of domain architecture, Response regulatory spans 3 to 119; it reads KVLIVDDSAL…SLNVSRIERE (117 aa). A 4-aspartylphosphate modification is found at Asp-53. The CheB-type methylesterase domain occupies 166–360; the sequence is SLTEIGVVLI…GQLNAWMSRT (195 aa). Catalysis depends on residues Ser-178, His-205, and Asp-302.

This sequence belongs to the CheB family. Phosphorylated by CheA. Phosphorylation of the N-terminal regulatory domain activates the methylesterase activity.

It localises to the cytoplasm. The catalysed reaction is [protein]-L-glutamate 5-O-methyl ester + H2O = L-glutamyl-[protein] + methanol + H(+). The enzyme catalyses L-glutaminyl-[protein] + H2O = L-glutamyl-[protein] + NH4(+). Involved in chemotaxis. Part of a chemotaxis signal transduction system that modulates chemotaxis in response to various stimuli. Catalyzes the demethylation of specific methylglutamate residues introduced into the chemoreceptors (methyl-accepting chemotaxis proteins or MCP) by CheR. Also mediates the irreversible deamidation of specific glutamine residues to glutamic acid. The protein is Protein-glutamate methylesterase/protein-glutamine glutaminase 3 of Rhodospirillum rubrum (strain ATCC 11170 / ATH 1.1.1 / DSM 467 / LMG 4362 / NCIMB 8255 / S1).